Here is a 276-residue protein sequence, read N- to C-terminus: Rhomboid protease GlpG (276 aa).

6 helical membrane passes run 94-114, 142-162, 169-189, 192-212, 229-249, and 250-270; these read GPVTWIVMLACVLVYIAMSLI, IFMHFSLMHILFNLLWWWYLG, LGSGKLIVITVISALLSGYVQ, FSGPWFGGLSGVVYALMGYVW, LIIFALLWIVAGWFDWFGMSM, and ANGAHIAGLIVGLAMAFVDTL. The Nucleophile role is filled by S201. Residue H254 is part of the active site.

This sequence belongs to the peptidase S54 family.

Its subcellular location is the cell inner membrane. It carries out the reaction Cleaves type-1 transmembrane domains using a catalytic dyad composed of serine and histidine that are contributed by different transmembrane domains.. Its function is as follows. Rhomboid-type serine protease that catalyzes intramembrane proteolysis. In Salmonella agona (strain SL483), this protein is Rhomboid protease GlpG.